Consider the following 216-residue polypeptide: Adenylate kinase (216 aa).

10 to 15 (GAGKGT) lines the ATP pocket. Residues 30–59 (STGDMFRAAMKAETELGLQAKSFIDKGALV) form an NMP region. AMP-binding positions include threonine 31, arginine 36, 57 to 59 (ALV), 85 to 88 (GFPR), and glutamine 92. An LID region spans residues 126–163 (GRRICKECGATYHLEFNPPAKADVCDKCGGELYQRSDD). Arginine 127 serves as a coordination point for ATP. 2 residues coordinate Zn(2+): cysteine 130 and cysteine 133. Residue 136–137 (TY) participates in ATP binding. Zn(2+) is bound by residues cysteine 150 and cysteine 153. AMP is bound by residues arginine 160 and arginine 171. Glutamine 199 lines the ATP pocket.

Belongs to the adenylate kinase family. Monomer.

The protein resides in the cytoplasm. The enzyme catalyses AMP + ATP = 2 ADP. It participates in purine metabolism; AMP biosynthesis via salvage pathway; AMP from ADP: step 1/1. In terms of biological role, catalyzes the reversible transfer of the terminal phosphate group between ATP and AMP. Plays an important role in cellular energy homeostasis and in adenine nucleotide metabolism. This is Adenylate kinase from Bacillus cytotoxicus (strain DSM 22905 / CIP 110041 / 391-98 / NVH 391-98).